We begin with the raw amino-acid sequence, 253 residues long: Phosphate import ATP-binding protein PstB (253 aa).

Residues 5–248 enclose the ABC transporter domain; that stretch reads IETINLHVYY…PEHELTEKYV (244 aa). Position 37-44 (37-44) interacts with ATP; sequence GPSGCGKS.

It belongs to the ABC transporter superfamily. Phosphate importer (TC 3.A.1.7) family. In terms of assembly, the complex is composed of two ATP-binding proteins (PstB), two transmembrane proteins (PstC and PstA) and a solute-binding protein (PstS).

The protein resides in the cell membrane. The enzyme catalyses phosphate(out) + ATP + H2O = ADP + 2 phosphate(in) + H(+). In terms of biological role, part of the ABC transporter complex PstSACB involved in phosphate import. Responsible for energy coupling to the transport system. The sequence is that of Phosphate import ATP-binding protein PstB from Pyrococcus furiosus (strain ATCC 43587 / DSM 3638 / JCM 8422 / Vc1).